Reading from the N-terminus, the 350-residue chain is Putative aminopeptidase MJ0555 (350 aa).

The a divalent metal cation site is built by His62 and Asp175. The active-site Proton acceptor is the Glu207. Residues Glu208, Asp230, and His321 each contribute to the a divalent metal cation site.

It belongs to the peptidase M42 family. Requires a divalent metal cation as cofactor.

The polypeptide is Putative aminopeptidase MJ0555 (Methanocaldococcus jannaschii (strain ATCC 43067 / DSM 2661 / JAL-1 / JCM 10045 / NBRC 100440) (Methanococcus jannaschii)).